Consider the following 280-residue polypeptide: Ataxin-3 homolog (280 aa).

Residues 7–187 (GGMLYHEVQE…QECPMSSSSE (181 aa)) enclose the Josephin domain. C20 (nucleophile) is an active-site residue. Catalysis depends on H126, which acts as the Proton acceptor. D141 is an active-site residue. Polar residues-rich tracts occupy residues 183–194 (SSSSEASNSFGQ) and 221–232 (DNVNQQRRNQAL). The interval 183-240 (SSSSEASNSFGQWLSPEDAERIRKNTSSGSSARNKRSNDNVNQQRRNQALSREEVQAF) is disordered. A UIM domain is found at 243-262 (MEDDDLKAAIAASLLDASAA).

It localises to the nucleus. It catalyses the reaction Thiol-dependent hydrolysis of ester, thioester, amide, peptide and isopeptide bonds formed by the C-terminal Gly of ubiquitin (a 76-residue protein attached to proteins as an intracellular targeting signal).. Functionally, interacts with key regulators of transcription and represses transcription. Acts as a histone-binding protein that regulates transcription. Acts as a deubiquitinating enzyme. This Arabidopsis thaliana (Mouse-ear cress) protein is Ataxin-3 homolog.